The chain runs to 625 residues: Chaperone protein HtpG (625 aa).

Residues 1 to 330 form an a; substrate-binding region; it reads MAKQVQNFNA…SSDLSLNVSR (330 aa). The b stretch occupies residues 331-545; sequence ELLQQDRQVT…SADPSAHMQK (215 aa). Positions 546–625 are c; the sequence is LMAQMGKEYA…MVQAADSTKH (80 aa).

It belongs to the heat shock protein 90 family. In terms of assembly, homodimer.

The protein localises to the cytoplasm. In terms of biological role, molecular chaperone. Has ATPase activity. The sequence is that of Chaperone protein HtpG from Bdellovibrio bacteriovorus (strain ATCC 15356 / DSM 50701 / NCIMB 9529 / HD100).